We begin with the raw amino-acid sequence, 716 residues long: 1,4-alpha-glucan branching enzyme GlgB (716 aa).

Asp-399 acts as the Nucleophile in catalysis. The Proton donor role is filled by Glu-452.

Belongs to the glycosyl hydrolase 13 family. GlgB subfamily. As to quaternary structure, monomer.

It catalyses the reaction Transfers a segment of a (1-&gt;4)-alpha-D-glucan chain to a primary hydroxy group in a similar glucan chain.. The protein operates within glycan biosynthesis; glycogen biosynthesis. Catalyzes the formation of the alpha-1,6-glucosidic linkages in glycogen by scission of a 1,4-alpha-linked oligosaccharide from growing alpha-1,4-glucan chains and the subsequent attachment of the oligosaccharide to the alpha-1,6 position. The chain is 1,4-alpha-glucan branching enzyme GlgB from Rhodopseudomonas palustris (strain BisB5).